Here is a 304-residue protein sequence, read N- to C-terminus: Putative S-adenosyl-L-methionine-dependent methyltransferase MAP_3385 (304 aa).

Residues aspartate 129 and 158–159 (DL) contribute to the S-adenosyl-L-methionine site.

The protein belongs to the UPF0677 family.

Its function is as follows. Exhibits S-adenosyl-L-methionine-dependent methyltransferase activity. In Mycolicibacterium paratuberculosis (strain ATCC BAA-968 / K-10) (Mycobacterium paratuberculosis), this protein is Putative S-adenosyl-L-methionine-dependent methyltransferase MAP_3385.